The sequence spans 368 residues: Anaphase-promoting complex subunit MND2 (368 aa).

2 disordered regions span residues 140-167 and 286-336; these read AQNAEGNNEEDFRQHDSREEDPRNNGSI and RNPY…GITP. Basic and acidic residues predominate over residues 149–162; it reads EDFRQHDSREEDPR. Ser293 is subject to Phosphoserine.

This sequence belongs to the APC15 family. The APC/C is composed of at least 13 subunits that stay tightly associated throughout the cell cycle: APC1, APC2, APC4, APC5, APC9, APC11, CDC16, CDC23, CDC26, CDC27, DOC1, MND2 and SWM1. MND2 interacts directly with APC1, APC5 and CDC23.

The protein operates within protein modification; protein ubiquitination. Component of the anaphase promoting complex/cyclosome (APC/C), a cell cycle-regulated E3 ubiquitin-protein ligase complex that controls progression through mitosis and the G1 phase of the cell cycle. The APC/C is thought to confer substrate specificity and, in the presence of ubiquitin-conjugating E2 enzymes, it catalyzes the formation of protein-ubiquitin conjugates that are subsequently degraded by the 26S proteasome. In early mitosis, the APC/C is activated by CDC20 and targets securin PDS1, the B-type cyclin CLB5, and other anaphase inhibitory proteins for proteolysis, thereby triggering the separation of sister chromatids at the metaphase-to-anaphase transition. In late mitosis and in G1, degradation of CLB5 allows activation of the APC/C by CDH1, which is needed to destroy CDC20 and the B-type cyclin CLB2 to allow exit from mitosis and creating the low CDK state necessary for cytokinesis and for reforming prereplicative complexes in G1 prior to another round of replication. This chain is Anaphase-promoting complex subunit MND2 (MND2), found in Saccharomyces cerevisiae (strain ATCC 204508 / S288c) (Baker's yeast).